The following is a 298-amino-acid chain: Protein REVEILLE 8 (298 aa).

The tract at residues 1 to 44 (MSSSPSRNPTNAEAPPPPPTSTDAVAEGSSKKVRKPYTITKSRE) is disordered. Residues 38-92 (TITKSRESWTEEEHDKFLEALQLFDRDWKKIEDFVGSKTVIQIRSHAQKYFLKVQ) enclose the HTH myb-type domain. The H-T-H motif DNA-binding region spans 65–88 (WKKIEDFVGSKTVIQIRSHAQKYF). A disordered region spans residues 96-123 (TLAHVPPPRPKRKAAHPYPQKASKNAQM).

The protein resides in the nucleus. In terms of biological role, transcriptional activator of evening element (EE)-containing clock-controlled genes. Forms a negative feedback loop with APRR5. Regulates the pattern of histone H3 acetylation of the TOC1 promoter. RVE4, RVE6 and RVE8 are components of the circadian system acting synergistically to regulate flowering time, redundantly to regulate leaf growth, and antagonistically to regulate hypocotyl elongation; their action seems independent of ZTL and HY5. The polypeptide is Protein REVEILLE 8 (Arabidopsis thaliana (Mouse-ear cress)).